The following is a 292-amino-acid chain: Phosphoribulokinase, chromosomal (292 aa).

Residue 12–20 (GSSGAGTTS) participates in ATP binding.

This sequence belongs to the phosphoribulokinase family. In terms of assembly, homooctamer.

It catalyses the reaction D-ribulose 5-phosphate + ATP = D-ribulose 1,5-bisphosphate + ADP + H(+). It functions in the pathway carbohydrate biosynthesis; Calvin cycle. The chain is Phosphoribulokinase, chromosomal (cfxP) from Cupriavidus necator (strain ATCC 17699 / DSM 428 / KCTC 22496 / NCIMB 10442 / H16 / Stanier 337) (Ralstonia eutropha).